The primary structure comprises 606 residues: DNA mismatch repair protein MutL (606 aa).

The interval 350–371 (GWRPSAPSAPWTPEASPSRPYQ) is disordered.

Belongs to the DNA mismatch repair MutL/HexB family.

This protein is involved in the repair of mismatches in DNA. It is required for dam-dependent methyl-directed DNA mismatch repair. May act as a 'molecular matchmaker', a protein that promotes the formation of a stable complex between two or more DNA-binding proteins in an ATP-dependent manner without itself being part of a final effector complex. The sequence is that of DNA mismatch repair protein MutL from Rhizobium rhizogenes (strain K84 / ATCC BAA-868) (Agrobacterium radiobacter).